We begin with the raw amino-acid sequence, 107 residues long: Large ribosomal subunit protein uL24 (107 aa).

This sequence belongs to the universal ribosomal protein uL24 family. As to quaternary structure, part of the 50S ribosomal subunit.

In terms of biological role, one of two assembly initiator proteins, it binds directly to the 5'-end of the 23S rRNA, where it nucleates assembly of the 50S subunit. One of the proteins that surrounds the polypeptide exit tunnel on the outside of the subunit. The polypeptide is Large ribosomal subunit protein uL24 (Fervidobacterium nodosum (strain ATCC 35602 / DSM 5306 / Rt17-B1)).